A 143-amino-acid chain; its full sequence is Large ribosomal subunit protein uL13 (143 aa).

This sequence belongs to the universal ribosomal protein uL13 family. Part of the 50S ribosomal subunit.

Its function is as follows. This protein is one of the early assembly proteins of the 50S ribosomal subunit, although it is not seen to bind rRNA by itself. It is important during the early stages of 50S assembly. This is Large ribosomal subunit protein uL13 from Methylacidiphilum infernorum (isolate V4) (Methylokorus infernorum (strain V4)).